Reading from the N-terminus, the 414-residue chain is Glyco-Gag protein (414 aa).

Residues M1–R51 lie on the Cytoplasmic side of the membrane. The helical transmembrane segment at L52 to E72 threads the bilayer. At T73–V414 the chain is on the extracellular side. N134 carries N-linked (GlcNAc...) asparagine; by host glycosylation. The interval V171–Q282 is disordered. Over residues F174–S193 the composition is skewed to pro residues. A compositionally biased stretch (low complexity) spans A194 to K206. A compositionally biased stretch (pro residues) spans P210 to S220.

Post-translationally, glycosylated by host. Cleaved by host near the middle of the molecule, releasing the c-terminal half containing capsid and nucleoprotein domains op GAG.

It is found in the host cell membrane. Plays a role in viral particle release. Presumably acts by facilitating the fission of the virion bud at the cell surface. This chain is Glyco-Gag protein, found in Felidae (cat family).